A 270-amino-acid chain; its full sequence is Plasmanylethanolamine desaturase 1 (270 aa).

3 helical membrane-spanning segments follow: residues 47-67, 74-94, and 161-181; these read WCSV…LLLL, PLVI…SGLV, and ALEQ…FGTF. The short motif at 186 to 190 is the Histidine box-1 element; the sequence is HKWSH. Residues 213 to 217 carry the Histidine box-2 motif; sequence HHRIH.

The protein belongs to the fatty acid desaturase CarF family.

It localises to the endoplasmic reticulum membrane. It catalyses the reaction a 1-(1,2-saturated alkyl)-2-acyl-sn-glycero-3-phosphoethanolamine + 2 Fe(II)-[cytochrome b5] + O2 + 2 H(+) = a 1-O-(1Z-alkenyl)-2-acyl-sn-glycero-3-phosphoethanolamine + 2 Fe(III)-[cytochrome b5] + 2 H2O. The enzyme catalyses a 1-O-hexadecyl-2-acyl-sn-glycero-3-phosphoethanolamine + 2 Fe(II)-[cytochrome b5] + O2 + 2 H(+) = a 1-O-(1Z-hexadecenyl)-2-acyl-sn-glycero-3-phosphoethanolamine + 2 Fe(III)-[cytochrome b5] + 2 H2O. The catalysed reaction is a 1-O-octadecyl-2-acyl-sn-glycero-3-phosphoethanolamine + 2 Fe(II)-[cytochrome b5] + O2 + 2 H(+) = a 1-O-(1Z-octadecenyl)-2-acyl-sn-glycero-3-phosphoethanolamine + 2 Fe(III)-[cytochrome b5] + 2 H2O. It carries out the reaction a 1-O-(9Z-octadecenyl)-2-acyl-sn-glycero-3-phosphoethanolamine + 2 Fe(II)-[cytochrome b5] + O2 + 2 H(+) = a 1-O-(1Z,9Z-octadecadienyl)-2-acyl-sn-glycero-3-phosphoethanolamine + 2 Fe(III)-[cytochrome b5] + 2 H2O. The protein operates within lipid metabolism; fatty acid metabolism. Functionally, plasmanylethanolamine desaturase involved in plasmalogen biogenesis in the endoplasmic reticulum membrane. Plasmalogens are glycerophospholipids with a hydrocarbon chain linked by a vinyl ether bond at the glycerol sn-1 position, and are involved in antioxidative and signaling mechanisms. This is Plasmanylethanolamine desaturase 1 from Homo sapiens (Human).